An 80-amino-acid polypeptide reads, in one-letter code: MEKLTILLLVAAVLMSTQAQNQEQRQQAKINFLSKRKPSAERWRRDCTSWFGRCTVNSECCSNSCDQTYCELYAFPSFGA.

The signal sequence occupies residues 1–19 (MEKLTILLLVAAVLMSTQA). Residues 20–43 (QNQEQRQQAKINFLSKRKPSAERW) constitute a propeptide that is removed on maturation. 3 disulfide bridges follow: C47–C61, C54–C65, and C60–C70. E59 is subject to 4-carboxyglutamate. Residue E71 is modified to 4-carboxyglutamate. P76 carries the 4-hydroxyproline modification. The propeptide occupies 78-80 (FGA).

In terms of tissue distribution, expressed by the venom duct.

The protein resides in the secreted. Gamma-conotoxins may act on voltage-gated non-specific cation pacemaker channels (HCN). Triggers depolarization and firing of action potential bursts in the caudodorsal neurons of lymnaea. This effect is due to activation or enhancement of a slow inward cation current that may underlie endogenous bursting activity of these neurons. This Conus pennaceus (Feathered cone) protein is Gamma-conotoxin PnVIIA.